We begin with the raw amino-acid sequence, 230 residues long: D-glycero-alpha-D-manno-heptose 1-phosphate guanylyltransferase (230 aa).

Belongs to the D-alpha-D-heptose-1-P guanylyltransferase family.

It catalyses the reaction D-glycero-alpha-D-manno-heptose 1-phosphate + GTP + H(+) = GDP-D-glycero-alpha-D-manno-heptose + diphosphate. Its pathway is nucleotide-sugar biosynthesis; GDP-D-glycero-alpha-D-manno-heptose biosynthesis; GDP-D-glycero-alpha-D-manno-heptose from D-glycero-alpha-D-manno-heptose 7-phosphate: step 3/3. It functions in the pathway cell surface structure biogenesis; S-layer biogenesis. Functionally, catalyzes the GDP transfer from GTP to D-glycero-alpha-D-manno-heptose 1-phosphate, yielding GDP-D-alpha-D-heptose. Cannot use ATP, CTP, dTTP or UTP as substrate. The sequence is that of D-glycero-alpha-D-manno-heptose 1-phosphate guanylyltransferase (hddC) from Aneurinibacillus thermoaerophilus.